The following is a 507-amino-acid chain: Microcystinase C (507 aa).

A signal peptide spans Met-1–Gly-21. Asp-167, His-169, and His-191 together coordinate Zn(2+).

Belongs to the peptidase M81 family. It depends on Zn(2+) as a cofactor.

With respect to regulation, inhibited by the metal chelators EDTA and 1,10-phenanthroline. Functionally, involved in peptidolytic degradation of cyclic heptapeptide hepatotoxin microcystin (MC). Cleaves both linear MC and the tetrapeptide degradation product of MC. Cleaves the Adda-Glu peptide bond of linear MC heptapeptides. This is Microcystinase C from Sphingomonas sp.